We begin with the raw amino-acid sequence, 152 residues long: Ribosome maturation factor RimP (152 aa).

The protein belongs to the RimP family.

The protein localises to the cytoplasm. Its function is as follows. Required for maturation of 30S ribosomal subunits. This Alkalilimnicola ehrlichii (strain ATCC BAA-1101 / DSM 17681 / MLHE-1) protein is Ribosome maturation factor RimP.